The chain runs to 82 residues: U16-lycotoxin-Ls1b (82 aa).

An N-terminal signal peptide occupies residues 1–22 (MSPKVQALLLLVGLITFLEVHA). The propeptide occupies 23–34 (EEELSETVESER). 4 cysteine pairs are disulfide-bonded: Cys-36/Cys-51, Cys-43/Cys-56, Cys-50/Cys-67, and Cys-58/Cys-65.

Belongs to the neurotoxin 02 (plectoxin) family. 04 (U16-lycotoxin) subfamily. As to expression, expressed by the venom gland.

Its subcellular location is the secreted. This Lycosa singoriensis (Wolf spider) protein is U16-lycotoxin-Ls1b.